The following is a 449-amino-acid chain: UDP-N-acetylmuramoylalanine--D-glutamate ligase (449 aa).

116–122 (GSNGKST) contributes to the ATP binding site.

This sequence belongs to the MurCDEF family.

Its subcellular location is the cytoplasm. The enzyme catalyses UDP-N-acetyl-alpha-D-muramoyl-L-alanine + D-glutamate + ATP = UDP-N-acetyl-alpha-D-muramoyl-L-alanyl-D-glutamate + ADP + phosphate + H(+). It participates in cell wall biogenesis; peptidoglycan biosynthesis. Functionally, cell wall formation. Catalyzes the addition of glutamate to the nucleotide precursor UDP-N-acetylmuramoyl-L-alanine (UMA). The protein is UDP-N-acetylmuramoylalanine--D-glutamate ligase of Shewanella violacea (strain JCM 10179 / CIP 106290 / LMG 19151 / DSS12).